Reading from the N-terminus, the 161-residue chain is MVSHSHSHTHQNQKDIEKEKLLKERLDSIKYYETFINETLNVDLNKSIEDREKVLENLENYLELKSNIELLIENKMDSMKTMINLGSECYVKARVQDTSYIYVDIGLGIHVKYTLEEAIKFINEKETFLNKTVENQTKKINQIKTKIDLIQNGLKELKHLE.

The protein belongs to the UXT family.

In Dictyostelium discoideum (Social amoeba), this protein is Protein UXT homolog.